A 533-amino-acid polypeptide reads, in one-letter code: DNA-directed RNA polymerase III subunit RPC3 (533 aa).

A disordered region spans residues 161-183 (PLVPDTDSSDPGPPPPAPNLVIN). Position 194 is a phosphoserine (S194). The interval 197–228 (GKGKRRRSSDEDAAGEPKAKKPRCTDNEEPTP) is disordered. Over residues 211-222 (GEPKAKKPRCTD) the composition is skewed to basic and acidic residues.

The protein belongs to the eukaryotic RPC3/POLR3C RNA polymerase subunit family. In terms of assembly, component of the RNA polymerase III complex consisting of 17 subunits: a ten-subunit horseshoe-shaped catalytic core composed of POLR3A/RPC1, POLR3B/RPC2, POLR1C/RPAC1, POLR1D/RPAC2, POLR3K/RPC10, POLR2E/RPABC1, POLR2F/RPABC2, POLR2H/RPABC3, POLR2K/RPABC4 and POLR2L/RPABC5; a mobile stalk composed of two subunits POLR3H/RPC8 and CRCP/RPC9, protruding from the core and functioning primarily in transcription initiation; and additional subunits homologous to general transcription factors of the RNA polymerase II machinery, POLR3C/RPC3-POLR3F/RPC6-POLR3G/RPC7 heterotrimer required for transcription initiation and POLR3D/RPC4-POLR3E/RPC5 heterodimer involved in both transcription initiation and termination. Directly interacts with POLR3G/RPC7 and POLR3GL. Directly interacts with POLR3F/RPC6. Interacts with GTF3C4. As part of the RNA polymerase III complex, interacts with PKP2.

It localises to the nucleus. Functionally, DNA-dependent RNA polymerase catalyzes the transcription of DNA into RNA using the four ribonucleoside triphosphates as substrates. Specific peripheric component of RNA polymerase III (Pol III) which synthesizes small non-coding RNAs including 5S rRNA, snRNAs, tRNAs and miRNAs from at least 500 distinct genomic loci. Part of POLR3C/RPC3-POLR3F/RPC6-POLR3G/RPC7 heterotrimer, coordinates the dynamics of Pol III stalk and clamp modules during the transition from apo to elongation state. Pol III plays a key role in sensing and limiting infection by intracellular bacteria and DNA viruses. Acts as a nuclear and cytosolic DNA sensor involved in innate immune response. Can sense non-self dsDNA that serves as template for transcription into dsRNA. The non-self RNA polymerase III transcripts, such as Epstein-Barr virus-encoded RNAs (EBERs) induce type I interferon and NF-kappa-B through the RIG-I pathway. Preferentially binds single-stranded DNA (ssDNA) in a sequence-independent manner. This is DNA-directed RNA polymerase III subunit RPC3 from Rattus norvegicus (Rat).